We begin with the raw amino-acid sequence, 618 residues long: V-type proton ATPase catalytic subunit A (618 aa).

251–258 (GAFGCGKT) contacts ATP.

It belongs to the ATPase alpha/beta chains family. V-ATPase is a heteromultimeric enzyme composed of a peripheral catalytic V1 complex (main components: subunits A, B, C, D, E, and F) attached to an integral membrane V0 proton pore complex (main component: the proteolipid protein).

The enzyme catalyses ATP + H2O + 4 H(+)(in) = ADP + phosphate + 5 H(+)(out). Functionally, catalytic subunit of the peripheral V1 complex of vacuolar ATPase. V-ATPase vacuolar ATPase is responsible for acidifying a variety of intracellular compartments in eukaryotic cells. In Dictyostelium discoideum (Social amoeba), this protein is V-type proton ATPase catalytic subunit A (vatA).